Here is a 96-residue protein sequence, read N- to C-terminus: UPF0235 protein VIBHAR_03581 (96 aa).

It belongs to the UPF0235 family.

The chain is UPF0235 protein VIBHAR_03581 from Vibrio campbellii (strain ATCC BAA-1116).